A 49-amino-acid chain; its full sequence is uncharacterized protein (49 aa).

The N-terminal stretch at 1-22 (MIQKPILLSSFLFLYIRALLHS) is a signal peptide.

This is an uncharacterized protein from Saccharomyces cerevisiae (strain ATCC 204508 / S288c) (Baker's yeast).